Reading from the N-terminus, the 213-residue chain is Thymidylate kinase (213 aa).

ATP is bound at residue 11–18 (GGEGAGKT).

It belongs to the thymidylate kinase family.

It catalyses the reaction dTMP + ATP = dTDP + ADP. Functionally, phosphorylation of dTMP to form dTDP in both de novo and salvage pathways of dTTP synthesis. The polypeptide is Thymidylate kinase (Shouchella clausii (strain KSM-K16) (Alkalihalobacillus clausii)).